The chain runs to 123 residues: MSITKDQILEAFAAMSVMEVVELIEAMEEKFGVSAAAAVVAGGAADAGAAAEEQTEFTVMLTAHGDNKVAVIKAIRGATGLGLKEAKAMSEAAPVAVKEGVSKEEAEALKKELVEAGATVEIK.

It belongs to the bacterial ribosomal protein bL12 family. As to quaternary structure, homodimer. Part of the ribosomal stalk of the 50S ribosomal subunit. Forms a multimeric L10(L12)X complex, where L10 forms an elongated spine to which 2 to 4 L12 dimers bind in a sequential fashion. Binds GTP-bound translation factors.

Functionally, forms part of the ribosomal stalk which helps the ribosome interact with GTP-bound translation factors. Is thus essential for accurate translation. The protein is Large ribosomal subunit protein bL12 of Shewanella sp. (strain ANA-3).